A 579-amino-acid chain; its full sequence is Mitogen-activated protein kinase kinase kinase 7 (579 aa).

The interval 1-300 (MSTASAASSS…FPGADEPLQY (300 aa)) is interaction with MAPK8IP1. Positions 36-291 (IEVEEVVGRG…KIMTHLMRYF (256 aa)) constitute a Protein kinase domain. ATP is bound by residues 42-50 (VGRGAFGVV) and Lys63. Residue Lys72 forms a Glycyl lysine isopeptide (Lys-Gly) (interchain with G-Cter in ubiquitin) linkage. Asp156 functions as the Proton acceptor in the catalytic mechanism. Lys158 is covalently cross-linked (Glycyl lysine isopeptide (Lys-Gly) (interchain with G-Cter in ubiquitin)). Phosphothreonine; by autocatalysis is present on residues Thr184 and Thr187. Ser192 carries the post-translational modification Phosphoserine; by autocatalysis. Lys209 is covalently cross-linked (Glycyl lysine isopeptide (Lys-Gly) (interchain with G-Cter in ubiquitin)). Disordered regions lie at residues 301-339 (PCQY…EQVP) and 354-391 (KNQA…MSAD). Residues 306 to 322 (DEGQSNSATSTGSFMDI) show a composition bias toward polar residues. Composition is skewed to low complexity over residues 323 to 334 (TSTNTSNKSDTN) and 361 to 375 (SESG…RGSS). 3 positions are modified to phosphoserine: Ser367, Ser389, and Ser412. Over residues 416-425 (LTVTGTDPGQ) the composition is skewed to polar residues. Residues 416 to 466 (LTVTGTDPGQVSSRSSSPSVRMITTSGPTSEKPARSHPWTPDDSTDTNGSD) are disordered. The span at 426–436 (VSSRSSSPSVR) shows a compositional bias: low complexity. Phosphoserine is present on Ser428.

Belongs to the protein kinase superfamily. STE Ser/Thr protein kinase family. MAP kinase kinase kinase subfamily. As to quaternary structure, can form homodimer. Binds both upstream activators and downstream substrates in multimolecular complexes. Interacts with TAB1/MAP3K7IP1, TAB2/MAP3K7IP2 and TAB3/MAP3K7IP3. Identified in the TRIKA2 complex composed of MAP3K7/TAK1, TAB1/MAP3K7IP1 and TAB2/MAP3K7IP2. Interacts with PPM1L and PPM1B/PP2CB. Interaction with PP2A and PPP6C leads to its repressed activity. Interacts with TRAF6 and TAB1/MAP3K7IP1; during IL-1 signaling. Interacts with TAOK1 and TAOK2; interaction with TAOK2 interferes with MAP3K7 interaction with IKKA, thus preventing NF-kappa-B activation. Interacts with DYNC2I2 (via WD domains). Interacts with CYLD and RBCK1. Interacts with TGFBR1; induces MAP3K7/TAK1 activation by TRAF6. Interacts with MAPK8IP1 and SMAD6. Interacts with isoform 1 of VRK2. Interacts with DAB2; the interaction is induced by TGF-beta stimulation and may mediate TGF-beta stimulated JNK activation. Interacts with TRIM5. Part of a complex containing ITCH, NDFIP1 and MAP3K7. Interacts with IFIT5; the interaction synergizes the recruitment of IKK to MAP3K7 and enhances IKK phosphorylation. Interacts with PLEKHM1 (via N- and C-terminus). Found in a complex with SH3RF1, RAC2, MAP2K7/MKK7, MAPK8IP1/JIP1, MAPK8/JNK1 and MAPK9/JNK2. Interacts with SASH1. Interacts with RIPK1. Mg(2+) is required as a cofactor. Post-translationally, association with TAB1/MAP3K7IP1 promotes autophosphorylation at Ser-192 and subsequent activation. Association with TAB2/MAP3K7IP2, itself associated with free unanchored Lys-63 polyubiquitin chain, promotes autophosphorylation and subsequent activation of MAP3K7. Dephosphorylation at Ser-192 by PPM1B/PP2CB and at Thr-187 by PP2A and PPP6C leads to inactivation. In terms of processing, 'Lys-48'-linked polyubiquitination at Lys-72 is induced by TNFalpha, and leads to proteasomal degradation. Undergoes 'Lys-48'-linked polyubiquitination catalyzed by ITCH. 'Lys-63'-linked polyubiquitination at Lys-158 by TRIM8 does not lead to proteasomal degradation but contributes to autophosphorylation and activation. Deubiquitinated by CYLD, a protease that selectively cleaves 'Lys-63'-linked ubiquitin chains. Deubiquitinated by USP19; leading to negative regulation of TNF-alpha- and IL-1beta-triggered NF-kappa-B activation.

Its subcellular location is the cytoplasm. The protein resides in the cell membrane. The catalysed reaction is L-seryl-[protein] + ATP = O-phospho-L-seryl-[protein] + ADP + H(+). It carries out the reaction L-threonyl-[protein] + ATP = O-phospho-L-threonyl-[protein] + ADP + H(+). Its activity is regulated as follows. Activated by pro-inflammatory cytokines and in response to physical and chemical stresses, including osmotic stress, oxidative stress, arsenic and ultraviolet light irradiation. Activated by 'Lys-63'-linked polyubiquitination and by autophosphorylation. Association with TAB1/MAP3K7IP1 and TAB2/MAP3K7IP2 promotes activation through autophosphorylation, whereas PPM1B/PP2CB, PP2A and PPP6C dephosphorylation leads to inactivation. Ceramides are also able to activate MAP3K7/TAK1. Functionally, serine/threonine kinase which acts as an essential component of the MAP kinase signal transduction pathway. Plays an important role in the cascades of cellular responses evoked by changes in the environment. Mediates signal transduction of TRAF6, various cytokines including interleukin-1 (IL-1), transforming growth factor-beta (TGFB), TGFB-related factors like BMP2 and BMP4, toll-like receptors (TLR), tumor necrosis factor receptor CD40 and B-cell receptor (BCR). Once activated, acts as an upstream activator of the MKK/JNK signal transduction cascade and the p38 MAPK signal transduction cascade through the phosphorylation and activation of several MAP kinase kinases like MAP2K1/MEK1, MAP2K3/MKK3, MAP2K6/MKK6 and MAP2K7/MKK7. These MAP2Ks in turn activate p38 MAPKs and c-jun N-terminal kinases (JNKs); both p38 MAPK and JNK pathways control the transcription factors activator protein-1 (AP-1). Independently of MAP2Ks and p38 MAPKs, acts as a key activator of NF-kappa-B by promoting activation of the I-kappa-B-kinase (IKK) core complex. Mechanistically, recruited to polyubiquitin chains of RIPK2 and IKBKG/NEMO via TAB2/MAP3K7IP2 and TAB3/MAP3K7IP3, and catalyzes phosphorylation and activation of IKBKB/IKKB component of the IKK complex, leading to NF-kappa-B activation. In osmotic stress signaling, plays a major role in the activation of MAPK8/JNK1, but not that of NF-kappa-B. Promotes TRIM5 capsid-specific restriction activity. Phosphorylates RIPK1 at 'Ser-321' which positively regulates RIPK1 interaction with RIPK3 to promote necroptosis but negatively regulates RIPK1 kinase activity and its interaction with FADD to mediate apoptosis. Phosphorylates STING1 in response to cGAMP-activation, promoting association between STEEP1 and STING1 and STING1 translocation to COPII vesicles. This is Mitogen-activated protein kinase kinase kinase 7 (MAP3K7) from Bos taurus (Bovine).